The following is a 351-amino-acid chain: MQTYGNPDVTYGWWVGNSVVTNRAGRFIGSHIGHTGLICFAAGGSTLWELARYNPEIPMGHQSSIFLAHLASLGLGFDEAGVWTGAGVATIAIFHLIFSAVYGTAGLAHSLLFDPDLKDGPIPTTKKFKLEWDNPDNLTFILGHHLIFFGVANIWFVEWARWHGIYDPAIGEIRTIFPGYGDFGMVYGHQFDFLTIDSLEEVMSGHAFLAFVQISGGAWHIATKQLGEYTEFKGKGLLSAEAVLSWSLAGIGWMAIVAAFWCAQNTTVYPIDWYGEPLALKFGISPYWVDTGDVSDSTAFLGHTTRAALSNVHYYFGFFFIQGHIWHALRAMGFDFRRVVGSVASLATTES.

6 helical membrane passes run 27 to 47 (FIGSHIGHTGLICFAAGGSTL), 81 to 101 (GVWTGAGVATIAIFHLIFSAV), 140 to 160 (FILGHHLIFFGVANIWFVEWA), 202 to 222 (VMSGHAFLAFVQISGGAWHIA), 242 to 262 (AVLSWSLAGIGWMAIVAAFWC), and 309 to 329 (LSNVHYYFGFFFIQGHIWHAL).

It belongs to the PsbB/PsbC family. IsiA/Pcb subfamily. The antenna complex consists of divinyl chlorophylls (a and b) and divinyl chlorophyll a/b binding proteins and binds more divinyl chlorophyll b than does the antenna complex from high-light-adapted Prochlorococcus. Requires divinyl chlorophyll a as cofactor. Divinyl chlorophyll b serves as cofactor.

It localises to the cellular thylakoid membrane. In terms of biological role, the antenna complex functions as a light receptor, it captures and delivers excitation energy to photosystems II and I. The Prochlorales pcb genes are not related to higher plant LHCs. This Prochlorococcus marinus (strain NATL2A) protein is Divinyl chlorophyll a/b light-harvesting protein PcbC (pcbC).